A 47-amino-acid chain; its full sequence is MAKGKRTFQPNNRRRARVHGFRLRMRTRAGRAIVSARRRKGRDSLTA.

It belongs to the bacterial ribosomal protein bL34 family.

The sequence is that of Large ribosomal subunit protein bL34 from Rhodococcus erythropolis (strain PR4 / NBRC 100887).